The primary structure comprises 872 residues: Protein translocase subunit SecA (872 aa).

Residues Gln87, 105–109 (GEGKT), and Asp510 contribute to the ATP site. Residues Cys847, Cys849, Cys858, and Cys859 each contribute to the Zn(2+) site.

It belongs to the SecA family. As to quaternary structure, monomer and homodimer. Part of the essential Sec protein translocation apparatus which comprises SecA, SecYEG and auxiliary proteins SecDF-YajC and YidC. It depends on Zn(2+) as a cofactor.

The protein resides in the cell inner membrane. Its subcellular location is the cytoplasm. It carries out the reaction ATP + H2O + cellular proteinSide 1 = ADP + phosphate + cellular proteinSide 2.. In terms of biological role, part of the Sec protein translocase complex. Interacts with the SecYEG preprotein conducting channel. Has a central role in coupling the hydrolysis of ATP to the transfer of proteins into and across the cell membrane, serving as an ATP-driven molecular motor driving the stepwise translocation of polypeptide chains across the membrane. This is Protein translocase subunit SecA from Aliarcobacter butzleri (strain RM4018) (Arcobacter butzleri).